The chain runs to 203 residues: Ras-like protein family member 10B (203 aa).

The segment at 1-203 (MVSTYRVAVL…ALRRNRCAIM (203 aa)) is small GTPase-like. Residue 11 to 18 (GARGVGKS) participates in GTP binding. An Effector region motif is present at residues 33 to 42 (CVPTTARRLY). Residues 59–62 (DFPP) and 128–131 (NKRD) contribute to the GTP site. At Cys200 the chain carries Cysteine methyl ester. Cys200 is lipidated: S-geranylgeranyl cysteine. Residues 201 to 203 (AIM) constitute a propeptide, removed in mature form.

Belongs to the small GTPase superfamily. Ras family. As to quaternary structure, interacts with CADPS. As to expression, expressed at high levels in skeletal muscle and, at much lower levels, in heart, brain and pancreas.

The protein localises to the cell membrane. The catalysed reaction is GTP + H2O = GDP + phosphate + H(+). Functionally, may facilitate the release of atrial natriuretic peptide by cardiomyocytes and hence play a role in the regulation of arterial pressure. The chain is Ras-like protein family member 10B (RASL10B) from Homo sapiens (Human).